The chain runs to 603 residues: MEKMNQGDRPFMTIQRNDSSDHLVLHMKNEMRNTKYKPVDYQQLRVLTEAKKLASASAELKIRKAMLTSKISKEQTLIKQHKQVWWQEYQRLNEVRYKMESEIKSLLNEENIGNECLCDLTNFEQELSEQWCTYLKNVINPIQQLRADLKYRQHHTLQHSHPHVEFNSVKVLEEVDFVKKQLKTVFERLGLEQQRIENDLSGWSIKILDHSLEEKTNLLSELPIELGSLECPYPDLKSSIHSEFCKFTQKYQKKLQDVDLQLEDIYRNCQLSEEDHWIYQAILDQYPGDLFGRRTLYLDMLQRYFPHKSRHDLIEHEKYCDQYRFAMEQRKILISNWNKNKKDFTQKAVLTLIEACAAHEMESTLAKDKKKQQELCADLKAKVLQWRAHQEEVARLEMEISARRREKEEEKEKLWKKKELLQRAEKKKKIKKYWAMKKQKWQEMEMRDLQRLEELKKLMAEQSLKDRERVKYRKELLERRLMEKKEAALQEAHEDKERARRLEALRKQVAVVAQFDPVRMMSDTMASKARMGIEIEEEFILQKPLFTLNTYNEQQIISDPRLRFELALREAGLHRTLYAKEILPKISPRKPPRKDMESTVFKI.

Coiled-coil stretches lie at residues 365–429 (LAKD…KKKK) and 461–510 (EQSL…KQVA).

The chain is Coiled-coil domain-containing protein 148 (CCDC148) from Macaca fascicularis (Crab-eating macaque).